Consider the following 555-residue polypeptide: MTLRAAVFDLDGVLALPAVFGVLGRTEEALALPRGLLNDAFQKGGPEGATTRLMKGEITLSQWIPLMEENCRKCSETAKVCLPKNFSIKEIFDKAISARKINRPMLQAALMLRKKGFTTAILTNTWLDDRAERDGLAQLMCELKMHFDFLIESCQVGMVKPEPQIYKFLLDTLKASPSEVVFLDDIGANLKPARDLGMVTILVQDTDTALKELEKVTGIQLLNTPAPLPTSCNPSDMSHGYVTVKPRVRLHFVELGSGPAVCLCHGFPESWYSWRYQIPALAQAGYRVLAMDMKGYGESSAPPEIEEYCMEVLCKEMVTFLDKLGLSQAVFIGHDWGGMLVWYMALFYPERVRAVASLNTPFIPANPNMSPLESIKANPVFDYQLYFQEPGVAEAELEQNLSRTFKSLFRASDESVLSMHKVCEAGGLFVNSPEEPSLSRMVTEEEIQFYVQQFKKSGFRGPLNWYRNMERNWKWACKSLGRKILIPALMVTAEKDFVLVPQMSQHMEDWIPHLKRGHIEDCGHWTQMDKPTEVNQILIKWLDSDARNPPVVSKM.

The tract at residues 1 to 224 (MTLRAAVFDL…KVTGIQLLNT (224 aa)) is phosphatase. 2 residues coordinate Mg(2+): Asp9 and Asp11. At Lys43 the chain carries N6-acetyllysine. Position 55 is an N6-succinyllysine (Lys55). Phosphate is bound at residue 123-124 (TN). Position 185 (Asp185) interacts with Mg(2+). 2 positions are modified to N6-acetyllysine: Lys191 and Lys215. Residues 235–555 (SDMSHGYVTV…ARNPPVVSKM (321 aa)) are epoxide hydrolase. The region spanning 259-531 (PAVCLCHGFP…CGHWTQMDKP (273 aa)) is the AB hydrolase-1 domain. Asp335 functions as the Nucleophile in the catalytic mechanism. Ser370 carries the phosphoserine modification. Tyr383 is a binding site for substrate. Residues Lys421 and Lys455 each carry the N6-succinyllysine modification. Tyr466 acts as the Proton donor in catalysis. Cys522 is lipidated: S-(15-deoxy-Delta12,14-prostaglandin J2-9-yl)cysteine. His524 functions as the Proton acceptor in the catalytic mechanism. The Microbody targeting signal motif lies at 553-555 (SKM). At Lys554 the chain carries N6-succinyllysine.

It belongs to the AB hydrolase superfamily. Epoxide hydrolase family. In terms of assembly, homodimer. Mg(2+) serves as cofactor. Post-translationally, the N-terminus is blocked. The covalent modification of cysteine by 15-deoxy-Delta12,14-prostaglandin-J2 is autocatalytic and reversible. It may occur as an alternative to other cysteine modifications, such as S-nitrosylation and S-palmitoylation.

Its subcellular location is the cytoplasm. It localises to the peroxisome. It carries out the reaction an epoxide + H2O = an ethanediol. It catalyses the reaction (9S,10S)-10-hydroxy-9-(phosphooxy)octadecanoate + H2O = (9S,10S)-9,10-dihydroxyoctadecanoate + phosphate. The enzyme catalyses 12-phosphooxy-(9Z)-octadecenoate + H2O = 12-hydroxy-(9Z)-octadecenoate + phosphate. The catalysed reaction is 12-phosphooxy-(9E)-octadecenoate + H2O = 12-hydroxy-(9E)-octadecenoate + phosphate. It carries out the reaction 12-(phosphooxy)octadecanoate + H2O = 12-hydroxyoctadecanoate + phosphate. It catalyses the reaction 8,9-epoxy-(5Z,11Z,14Z)-eicosatrienoate + H2O = 8,9-dihydroxy-(5Z,11Z,14Z)-eicosatrienoate. The enzyme catalyses 11,12-epoxy-(5Z,8Z,14Z)-eicosatrienoate + H2O = 11,12-dihydroxy-(5Z,8Z,14Z)-eicosatrienoate. The catalysed reaction is 14,15-epoxy-(5Z,8Z,11Z)-eicosatrienoate + H2O = 14,15-dihydroxy-(5Z,8Z,11Z)-eicosatrienoate. It carries out the reaction 9,10-epoxy-(12Z)-octadecenoate + H2O = 9,10-dihydroxy-(12Z)-octadecenoate. It catalyses the reaction 8-hydroxy-(11S,12S)-epoxy-(5Z,9E,14Z)-eicosatrienoate + H2O = (8,11R,12S)-trihydroxy-(5Z,9E,14Z)-eicosatrienoate. The enzyme catalyses 10-hydroxy-(11S,12S)-epoxy- (5Z,8Z,14Z)-eicosatrienoate + H2O = (10,11S,12R)-trihydroxy-(5Z,8Z,14Z)-eicosatrienoate. The catalysed reaction is 1-tetradecanoyl-sn-glycerol 3-phosphate + H2O = 1-tetradecanoyl-sn-glycerol + phosphate. It carries out the reaction 1-octadecanoyl-sn-glycero-3-phosphate + H2O = 1-octadecanoyl-sn-glycerol + phosphate. It catalyses the reaction 1-(5Z,8Z,11Z,14Z-eicosatetraenoyl)-sn-glycero-3-phosphate + H2O = 1-(5Z,8Z,11Z,14Z-eicosatetraenoyl)-sn-glycerol + phosphate. The enzyme catalyses 1-hexadecanoyl-sn-glycero-3-phosphate + H2O = 1-hexadecanoyl-sn-glycerol + phosphate. The catalysed reaction is 1-(9Z-octadecenoyl)-sn-glycero-3-phosphate + H2O = 1-(9Z-octadecenoyl)-sn-glycerol + phosphate. It carries out the reaction (8S,9R)-epoxy-(5Z,11Z,14Z)-eicosatrienoate + H2O = (8S,9S)-dihydroxy-(5Z,11Z,14Z)-eicosatrienoate. It catalyses the reaction (11S,12R)-epoxy-(5Z,8Z,14Z)-eicosatrienoate + H2O = (11R,12R)-dihydroxy-(5Z,8Z,14Z)-eicosatrienoate. The enzyme catalyses (11S,12R)-epoxy-(5Z,8Z,14Z)-eicosatrienoate + H2O = (11S,12S)-dihydroxy-(5Z,8Z,14Z)-eicosatrienoate. The catalysed reaction is (14S,15R)-epoxy-(5Z,8Z,11Z)-eicosatrienoate + H2O = (14R,15R)-dihydroxy-(5Z,8Z,11Z)-eicosatrienoate. It carries out the reaction (14S,15R)-epoxy-(5Z,8Z,11Z)-eicosatrienoate + H2O = (14S,15S)-dihydroxy-(5Z,8Z,11Z)-eicosatrienoate. It catalyses the reaction (11R,12S)-epoxy-(5Z,8Z,14Z)-eicosatrienoate + H2O = (11S,12S)-dihydroxy-(5Z,8Z,14Z)-eicosatrienoate. The enzyme catalyses (11R,12S)-epoxy-(5Z,8Z,14Z)-eicosatrienoate + H2O = (11R,12R)-dihydroxy-(5Z,8Z,14Z)-eicosatrienoate. The catalysed reaction is (8S,9R)-epoxy-(5Z,11Z,14Z)-eicosatrienoate + H2O = (8R,9R)-dihydroxy-(5Z,11Z,14Z)-eicosatrienoate. It carries out the reaction (14R,15S)-epoxy-(5Z,8Z,11Z)-eicosatrienoate + H2O = (14R,15R)-dihydroxy-(5Z,8Z,11Z)-eicosatrienoate. Its activity is regulated as follows. Inhibited by 1-(1-acetylpiperidin-4-yl)-3-(4-(trifl uoromethoxy)phenyl)urea (TPAU), 1-cyclohexyl-3-dodecylurea (CDU), 12-(3-adamantan-1-yl-ureido)-dodecanoic acid (AUDA), 1-((3S, 5S, 7S)-adamantan-1-yl)-3-(5-(2-(2-ethoxyethoxy) ethoxy)pentyl)urea (AEPU), N-adamantyl-N[']-cyclohexyl urea (ACU), 4-(((1S, 4S)-4-(3-((3S, 5S, 7S)-adamantan-1-yl) ureido)cyclohexyl)oxy)benzoic acid (c-AUCB), 4-(((1R, 4R)-4-(3-((3S, 5S, 7S)-adamantan-1-yl)ureido)cyclohexyl)oxy)benzoic acid (t-AUCB), 4-(((1R, 4R)-4-(3-(4(trifluoromethoxy)phenyl)ureido)cyclohexyl)oxy)benzoic acid (t-TAUCB) and to a lesser extent by 8-(3-((3S, 5S, 7S)-adamantan-1-yl)ureido) octanoic acid (AUOA). Phosphatase activity is inhibited by dodecyl-phosphate, phospholipids such as phospho-lysophosphatidic acids and fatty acids such as palmitic acid and lauric acid. In terms of biological role, bifunctional enzyme. The C-terminal domain has epoxide hydrolase activity and acts on epoxides (alkene oxides, oxiranes) and arene oxides. Plays a role in xenobiotic metabolism by degrading potentially toxic epoxides. Also determines steady-state levels of physiological mediators. Bifunctional enzyme. The N-terminal domain has lipid phosphatase activity, with the highest activity towards threo-9,10-phosphonooxy-hydroxy-octadecanoic acid, followed by erythro-9,10-phosphonooxy-hydroxy-octadecanoic acid, 12-phosphonooxy-octadec-9Z-enoic acid and 12-phosphonooxy-octadec-9E-enoic acid. Has phosphatase activity toward lyso-glycerophospholipids with also some lower activity toward lysolipids of sphingolipid and isoprenoid phosphates. In Homo sapiens (Human), this protein is Bifunctional epoxide hydrolase 2.